The sequence spans 227 residues: Ribonuclease 3 (227 aa).

Residues 4 to 133 (FETLEKLLSY…LIAAIYLDSN (130 aa)) form the RNase III domain. E46 serves as a coordination point for Mg(2+). The active site involves D50. N119 and E122 together coordinate Mg(2+). E122 is an active-site residue. Residues 158–226 (DPKTALQEWA…ARSLLHRLKN (69 aa)) form the DRBM domain.

The protein belongs to the ribonuclease III family. As to quaternary structure, homodimer. Requires Mg(2+) as cofactor.

It localises to the cytoplasm. The catalysed reaction is Endonucleolytic cleavage to 5'-phosphomonoester.. In terms of biological role, digests double-stranded RNA. Involved in the processing of primary rRNA transcript to yield the immediate precursors to the large and small rRNAs (23S and 16S). Processes some mRNAs, and tRNAs when they are encoded in the rRNA operon. Processes pre-crRNA and tracrRNA of type II CRISPR loci if present in the organism. In Rickettsia massiliae (strain Mtu5), this protein is Ribonuclease 3.